The following is a 2319-amino-acid chain: AT-rich interactive domain-containing protein 1B (2319 aa).

Low complexity-rich tracts occupy residues 1–21 (MAARAAAAAAAAAARARARAG) and 43–56 (GARGAAAAAAAPGP). Disordered stretches follow at residues 1–74 (MAAR…VHHH), 155–306 (VGEA…GGGG), 321–414 (APAS…GAGA), 487–546 (RFAG…AGAA), 577–1062 (QQRS…LMNT), and 1085–1129 (DMMS…KITK). Position 2 is an N-acetylalanine (Ala2). Over residues 57–68 (MLGGGGDGGGGL) the composition is skewed to gly residues. The segment covering 165-188 (QQHHHHHHAHHHHHHAHHLHHHHA) has biased composition (basic residues). 2 stretches are compositionally biased toward low complexity: residues 189-215 (LQQQLNQFQQQQQQQQQQQQQQQQQQH) and 343-363 (SPGMGMMHSASAAAAGAPGSM). A compositionally biased stretch (polar residues) spans 365–379 (PLQNSHEGYPNSQCN). Residues 388–414 (GAGGGGGGGGGGGGGSGGGGGGGGAGA) show a composition bias toward gly residues. Arg487 bears the Asymmetric dimethylarginine mark. A compositionally biased stretch (polar residues) spans 489–510 (AGQNQHPSGATPTLNQLLTSPS). The short motif at 502 to 506 (LNQLL) is the LXXLL element. Positions 536–546 (PQSQAAAAGAA) are enriched in low complexity. Phosphoserine is present on residues Ser585 and Ser599. Arg608 carries the post-translational modification Asymmetric dimethylarginine. Low complexity predominate over residues 620 to 630 (SQPQQSSPYPG). An Asymmetric dimethylarginine modification is found at Arg640. Low complexity-rich tracts occupy residues 651–670 (GAMAGMQYPQQQMPPQYGQQ), 677–687 (QQGQQPYYSQQ), 695–712 (PQAQYLPSQSQQRYQPQQ), 767–783 (SSAVSASGSTSSQGDQS), 811–832 (GSPVGSNQSRSGPISPASIPGS), and 840–849 (GSQSESSSHP). Residues 866–880 (TQRNPQMAQYGPQQT) show a composition bias toward polar residues. A compositionally biased stretch (low complexity) spans 881–892 (GPSMSPHPSPGG). Polar residues-rich tracts occupy residues 899–923 (SSFQQSNSSGTYGPQMSQYGPQGNY) and 947–958 (SANNQMHGQGPS). Composition is skewed to low complexity over residues 980 to 994 (PGNMSSMTPSSPGMS) and 1014 to 1028 (EAAAAVMQAAANSAQ). A compositionally biased stretch (polar residues) spans 1029 to 1062 (SRQGSFPGMNQSGLMASSSPYSQPMNNSSSLMNT). Residues 1136–1227 (EPERKLWVDR…YLFAFECKIE (92 aa)) enclose the ARID domain. Disordered regions lie at residues 1230–1334 (EEPP…QQGM), 1346–1443 (EPNK…PNYK), 1475–1647 (NQYG…FLPS), and 1782–1852 (DHNA…KQAS). Polar residues-rich tracts occupy residues 1254 to 1273 (ANSGSLQGPQTPQSTGSNSM) and 1287 to 1304 (STPHGQMTPMQGGRSSTI). Low complexity predominate over residues 1305–1319 (SVHDPFSDVSDSSFP). Composition is skewed to polar residues over residues 1320-1334 (KRNSMTPNAPYQQGM) and 1364-1388 (PFMTQGQMPNSSMQDMYNQSPSGAM). Low complexity predominate over residues 1426–1440 (PPYGGHQPGLYPQQP). The Nuclear localization signal motif lies at 1441–1460 (NYKRHMDGMYGPPAKRHEGD). Composition is skewed to polar residues over residues 1522–1534 (LQSSSSEGPQQNM) and 1579–1601 (ESQWPSHVSQRQPYMSSSASMQP). Phosphoserine occurs at positions 1625, 1638, and 1642. Residues 1627–1641 (ASFQRSLENRMSPSK) show a composition bias toward polar residues. Residues 1782-1791 (DHNAARKDDS) show a composition bias toward basic and acidic residues. At Ser1798 the chain carries Phosphoserine. The span at 1799–1823 (GKEEEDAECIDDDEEDEEDEEEDSE) shows a compositional bias: acidic residues. The span at 1842-1852 (ADPKEKPKQAS) shows a compositional bias: basic and acidic residues. N6-acetyllysine is present on Lys1860. Disordered regions lie at residues 1904 to 1941 (FESKMEIPPRRRPPPPLSSAGRKKEQEGKGDSEEQQEK) and 1954 to 1973 (RPGALPEDANPGPQTESSKF). A compositionally biased stretch (basic and acidic residues) spans 1925–1940 (RKKEQEGKGDSEEQQE). Residues 2119–2123 (LDGLL) carry the LXXLL motif.

As to quaternary structure, component of SWI/SNF chromatin remodeling complexes, in some of which it can be mutually exclusive with ARID1B/BAF250B. The canonical complex contains a catalytic subunit (either SMARCA4/BRG1/BAF190A or SMARCA2/BRM/BAF190B) and at least SMARCE1, ACTL6A/BAF53, SMARCC1/BAF155, SMARCC2/BAF170, and SMARCB1/SNF5/BAF47. Other subunits specific to each of the complexes may also be present permitting several possible combinations developmentally and tissue specific. Component of the BAF (SWI/SNF-A) complex, which includes at least actin (ACTB), ARID1A/BAF250A, ARID1B/BAF250B, SMARCA2/BRM, SMARCA4/BRG1/BAF190A, ACTL6A/BAF53, ACTL6B/BAF53B, SMARCE1/BAF57, SMARCC1/BAF155, SMARCC2/BAF170, SMARCB1/SNF5/INI1, and one or more SMARCD1/BAF60A, SMARCD2/BAF60B, or SMARCD3/BAF60C. In muscle cells, the BAF complex also contains DPF3. Component of neural progenitors-specific chromatin remodeling complex (npBAF complex) composed of at least, ARID1A/BAF250A or ARID1B/BAF250B, SMARCD1/BAF60A, SMARCD3/BAF60C, SMARCA2/BRM/BAF190B, SMARCA4/BRG1/BAF190A, SMARCB1/BAF47, SMARCC1/BAF155, SMARCE1/BAF57, SMARCC2/BAF170, PHF10/BAF45A, ACTL6A/BAF53A and actin. Component of neuron-specific chromatin remodeling complex (nBAF complex) composed of at least, ARID1A/BAF250A or ARID1B/BAF250B, SMARCD1/BAF60A, SMARCD3/BAF60C, SMARCA2/BRM/BAF190B, SMARCA4/BRG1/BAF190A, SMARCB1/BAF47, SMARCC1/BAF155, SMARCE1/BAF57, SMARCC2/BAF170, DPF1/BAF45B, DPF3/BAF45C, ACTL6B/BAF53B and actin. Component of a SWI/SNF-like EBAFb complex, at least composed of SMARCA4/BRG1/BAF190A, SMARCB1/BAF47/SNF5, ACTL6A/BAF53A, SMARCE1/BAF57, SMARCD1/BAF60A, SMARCD2/BAF60B, SMARCC1/BAF155, SMARCC2/BAF170, ARID1B/BAF250B, MLLT1/ENL and actin. Interacts through its C-terminus with SMARCA2/BRM/BAF190B and SMARCA4/BRG1/BAF190A. Interacts with SMARCC1/BAF155. As to expression, widely expressed with high levels in heart, skeletal muscle and kidney.

Its subcellular location is the nucleus. Involved in transcriptional activation and repression of select genes by chromatin remodeling (alteration of DNA-nucleosome topology). Component of SWI/SNF chromatin remodeling complexes that carry out key enzymatic activities, changing chromatin structure by altering DNA-histone contacts within a nucleosome in an ATP-dependent manner. Belongs to the neural progenitors-specific chromatin remodeling complex (npBAF complex) and the neuron-specific chromatin remodeling complex (nBAF complex). During neural development a switch from a stem/progenitor to a postmitotic chromatin remodeling mechanism occurs as neurons exit the cell cycle and become committed to their adult state. The transition from proliferating neural stem/progenitor cells to postmitotic neurons requires a switch in subunit composition of the npBAF and nBAF complexes. As neural progenitors exit mitosis and differentiate into neurons, npBAF complexes which contain ACTL6A/BAF53A and PHF10/BAF45A, are exchanged for homologous alternative ACTL6B/BAF53B and DPF1/BAF45B or DPF3/BAF45C subunits in neuron-specific complexes (nBAF). The npBAF complex is essential for the self-renewal/proliferative capacity of the multipotent neural stem cells. The nBAF complex along with CREST plays a role regulating the activity of genes essential for dendrite growth. Binds DNA non-specifically. The sequence is that of AT-rich interactive domain-containing protein 1B from Homo sapiens (Human).